Consider the following 200-residue polypeptide: NADH-quinone oxidoreductase subunit I 1 (200 aa).

4Fe-4S ferredoxin-type domains follow at residues 52–82 (LNRH…VEGA) and 98–127 (RVYQ…MTNE). Positions 62, 65, 68, 72, 107, 110, 113, and 117 each coordinate [4Fe-4S] cluster. Residues 181-200 (TERQVAVSKGEKPQDEGVEA) are disordered. Residues 189-200 (KGEKPQDEGVEA) are compositionally biased toward basic and acidic residues.

Belongs to the complex I 23 kDa subunit family. NDH-1 is composed of 14 different subunits. Subunits NuoA, H, J, K, L, M, N constitute the membrane sector of the complex. The cofactor is [4Fe-4S] cluster.

It localises to the cell membrane. The catalysed reaction is a quinone + NADH + 5 H(+)(in) = a quinol + NAD(+) + 4 H(+)(out). Functionally, NDH-1 shuttles electrons from NADH, via FMN and iron-sulfur (Fe-S) centers, to quinones in the respiratory chain. The immediate electron acceptor for the enzyme in this species is believed to be ubiquinone. Couples the redox reaction to proton translocation (for every two electrons transferred, four hydrogen ions are translocated across the cytoplasmic membrane), and thus conserves the redox energy in a proton gradient. This is NADH-quinone oxidoreductase subunit I 1 from Streptomyces avermitilis (strain ATCC 31267 / DSM 46492 / JCM 5070 / NBRC 14893 / NCIMB 12804 / NRRL 8165 / MA-4680).